The sequence spans 425 residues: 5-nitroanthranilic acid aminohydrolase (425 aa).

Aspartate 88 is a catalytic residue. Glutamate 158 functions as the Proton acceptor in the catalytic mechanism.

The protein belongs to the peptidase M20A family. The cofactor is Co(2+). Requires Mn(2+) as cofactor. Zn(2+) serves as cofactor. It depends on Fe(2+) as a cofactor. Ni(2+) is required as a cofactor.

It carries out the reaction 5-nitroanthranilate + H2O + H(+) = 5-nitrosalicylate + NH4(+). Functionally, catalyzes the deamination of 5-nitroanthranilate (5NAA) to 5-nitrosalicylate (5NSA), the first step in biodegradation of 5-nitroanthranilate. The polypeptide is 5-nitroanthranilic acid aminohydrolase (naaA) (Bradyrhizobium sp).